We begin with the raw amino-acid sequence, 500 residues long: Glycerol kinase (500 aa).

ADP is bound at residue Thr-13. The ATP site is built by Thr-13, Thr-14, and Ser-15. Thr-13 contributes to the sn-glycerol 3-phosphate binding site. Arg-17 is a binding site for ADP. Sn-glycerol 3-phosphate is bound by residues Arg-83, Glu-84, Tyr-135, and Asp-244. The glycerol site is built by Arg-83, Glu-84, Tyr-135, Asp-244, and Gln-245. Thr-266, Gly-309, Gly-410, and Asn-414 together coordinate ADP. The ATP site is built by Thr-266, Gly-309, and Gly-410.

It belongs to the FGGY kinase family.

The catalysed reaction is glycerol + ATP = sn-glycerol 3-phosphate + ADP + H(+). The protein operates within polyol metabolism; glycerol degradation via glycerol kinase pathway; sn-glycerol 3-phosphate from glycerol: step 1/1. Inhibited by fructose 1,6-bisphosphate (FBP). Its function is as follows. Key enzyme in the regulation of glycerol uptake and metabolism. Catalyzes the phosphorylation of glycerol to yield sn-glycerol 3-phosphate. This is Glycerol kinase from Chromobacterium violaceum (strain ATCC 12472 / DSM 30191 / JCM 1249 / CCUG 213 / NBRC 12614 / NCIMB 9131 / NCTC 9757 / MK).